The primary structure comprises 299 residues: tRNA-cytidine(32) 2-sulfurtransferase (299 aa).

The PP-loop motif motif lies at 56–61 (SGGKDS). [4Fe-4S] cluster-binding residues include C131, C134, and C222.

This sequence belongs to the TtcA family. Homodimer. Mg(2+) serves as cofactor. [4Fe-4S] cluster is required as a cofactor.

The protein localises to the cytoplasm. The enzyme catalyses cytidine(32) in tRNA + S-sulfanyl-L-cysteinyl-[cysteine desulfurase] + AH2 + ATP = 2-thiocytidine(32) in tRNA + L-cysteinyl-[cysteine desulfurase] + A + AMP + diphosphate + H(+). Its pathway is tRNA modification. Catalyzes the ATP-dependent 2-thiolation of cytidine in position 32 of tRNA, to form 2-thiocytidine (s(2)C32). The sulfur atoms are provided by the cysteine/cysteine desulfurase (IscS) system. The chain is tRNA-cytidine(32) 2-sulfurtransferase from Xylella fastidiosa (strain 9a5c).